The following is a 296-amino-acid chain: 4-hydroxy-tetrahydrodipicolinate synthase (296 aa).

Residue threonine 49 participates in pyruvate binding. The active-site Proton donor/acceptor is the tyrosine 137. The active-site Schiff-base intermediate with substrate is the lysine 166. Isoleucine 208 serves as a coordination point for pyruvate.

It belongs to the DapA family. In terms of assembly, homotetramer; dimer of dimers.

The protein resides in the cytoplasm. It catalyses the reaction L-aspartate 4-semialdehyde + pyruvate = (2S,4S)-4-hydroxy-2,3,4,5-tetrahydrodipicolinate + H2O + H(+). Its pathway is amino-acid biosynthesis; L-lysine biosynthesis via DAP pathway; (S)-tetrahydrodipicolinate from L-aspartate: step 3/4. In terms of biological role, catalyzes the condensation of (S)-aspartate-beta-semialdehyde [(S)-ASA] and pyruvate to 4-hydroxy-tetrahydrodipicolinate (HTPA). The polypeptide is 4-hydroxy-tetrahydrodipicolinate synthase (Chlorobium phaeobacteroides (strain DSM 266 / SMG 266 / 2430)).